A 395-amino-acid chain; its full sequence is Proteinase-activated receptor 2 (395 aa).

The signal sequence occupies residues 1 to 25 (MRSPSAAWLLGGVLLLAASGSCNRT). 2 N-linked (GlcNAc...) asparagine glycosylation sites follow: asparagine 23 and asparagine 29. The propeptide at 26-34 (VPGNKSKGR) is removed for receptor activation. The Extracellular portion of the chain corresponds to 35-69 (SLIGNVDNSPVVAGRGVTVKPGFSVDEFSTSVLTG). The chain crosses the membrane as a helical span at residues 70 to 99 (KLTTVFLPVVYTIVFVVGLPSNGMALWVFL). Topologically, residues 100 to 106 (FRTKKKH) are cytoplasmic. Residues 107–135 (PAVIYMANLALADLLSVTWFPLKIAYHIH) traverse the membrane as a helical segment. Topologically, residues 136-147 (GNNWIYGESLCK) are extracellular. A disulfide bridge links cysteine 146 with cysteine 224. Residues 148-175 (VLIGFFYGNMYCSILFMTCLSVQRYWVI) traverse the membrane as a helical segment. The Cytoplasmic segment spans residues 176–181 (VNPMVH). The helical transmembrane segment at 182 to 209 (PKKQANIAIGVSLGIWLLILLLTIPLYV) threads the bilayer. At 210-233 (VKQTSYIRALNITTCHDVLPEEVL) the chain is on the extracellular side. N-linked (GlcNAc...) asparagine glycosylation occurs at asparagine 220. The helical transmembrane segment at 234–267 (VGDMFNYFLSLAIGVFLFPAFLTASAYVLMIRTL) threads the bilayer. Over 268–275 (QSSAMDES) the chain is Cytoplasmic. Residues 276–315 (SGKKRRRAIKLIVTVLAMYLICFTPSNLLLVVHYFLIKTR) form a helical membrane-spanning segment. Topologically, residues 316–321 (GQSHVY) are extracellular. The chain crosses the membrane as a helical span at residues 322–345 (ALYIVALCLSTLNSCIDPFVYYFI). Topologically, residues 346–395 (SQDFRDHAKNALLCRSVRTVKRMQVSLSSKKFSGKSSSYSSSSTSVKGSY) are cytoplasmic. Cysteine 359 carries S-palmitoyl cysteine lipidation.

This sequence belongs to the G-protein coupled receptor 1 family. As to quaternary structure, interacts with TLR4, COPS5 and TMED2. Interacts with GNAQ, GNA11, GNA12, GNA13 and GNA14. In terms of processing, a proteolytic cleavage generates a new N-terminus that functions as a tethered ligand. Activating serine proteases include trypsin, mast cell tryptase, coagulation factors VII and Xa, myeloblastin/PRTN3 and membrane-type serine protease 1/ST14. Proposed subsequent cleavage by serine proteases is leading to receptor deactivation and include neutrophil elastase and cathepsin G. At least in part, implicated proteases are also shown to activate the receptor; the glycosylation status of the receptor is thought to contribute to the difference. N-glycosylated and sialylated. Post-translationally, multiple phosphorylated on serine and threonine residues in the cytoplasmic region upon receptor activation; required for receptor desensitization and recruitment of beta-arrestin. In terms of processing, monoubiquitinated by CBL at the plasma membrane and in early endosomes; not required for receptor endocytosis but for translocation to late endosomes or lysosomes. Deubiquitination involves STAMBP and USP8; required for lysosomal trafficking and receptor degradation.

The protein resides in the cell membrane. Receptor for trypsin and trypsin-like enzymes coupled to G proteins. Its function is mediated through the activation of several signaling pathways including phospholipase C (PLC), intracellular calcium, mitogen-activated protein kinase (MAPK), I-kappaB kinase/NF-kappaB and Rho. Can also be transactivated by cleaved F2R/PAR1. Involved in modulation of inflammatory responses and regulation of innate and adaptive immunity, and acts as a sensor for proteolytic enzymes generated during infection. Generally is promoting inflammation. Can signal synergistically with TLR4 and probably TLR2 in inflammatory responses and modulates TLR3 signaling. Has a protective role in establishing the endothelial barrier; the activity involves coagulation factor X. Regulates endothelial cell barrier integrity during neutrophil extravasation, probably following proteolytic cleavage by PRTN3. Proposed to have a bronchoprotective role in airway epithelium, but also shown to compromise the airway epithelial barrier by interrupting E-cadherin adhesion. Involved in the regulation of vascular tone; activation results in hypotension presumably mediated by vasodilation. Associates with a subset of G proteins alpha subunits such as GNAQ, GNA11, GNA14, GNA12 and GNA13, but probably not with G(o) alpha, G(i) subunit alpha-1 and G(i) subunit alpha-2. Believed to be a class B receptor which internalizes as a complex with arrestin and traffic with it to endosomal vesicles, presumably as desensitized receptor, for extended periods of time. Mediates inhibition of TNF-alpha stimulated JNK phosphorylation via coupling to GNAQ and GNA11; the function involves dissociation of RIPK1 and TRADD from TNFR1. Mediates phosphorylation of nuclear factor NF-kappa-B RELA subunit at 'Ser-536'; the function involves IKBKB and is predominantly independent of G proteins. Involved in cellular migration. Involved in cytoskeletal rearrangement and chemotaxis through beta-arrestin-promoted scaffolds; the function is independent of GNAQ and GNA11 and involves promotion of cofilin dephosphorylation and actin filament severing. Induces redistribution of COPS5 from the plasma membrane to the cytosol and activation of the JNK cascade is mediated by COPS5. Involved in the recruitment of leukocytes to the sites of inflammation and is the major PAR receptor capable of modulating eosinophil function such as pro-inflammatory cytokine secretion, superoxide production and degranulation. During inflammation promotes dendritic cell maturation, trafficking to the lymph nodes and subsequent T-cell activation. Involved in antimicrobial response of innate immune cells; activation enhances phagocytosis of Gram-positive and killing of Gram-negative bacteria. Acts synergistically with interferon-gamma in enhancing antiviral responses. Probably mediates activation of pro-inflammatory and pro-fibrotic responses in fibroblasts, triggered by coagulation factor Xa (F10). Probably mediates activation of barrier protective signaling responses in endothelial cells, triggered by coagulation factor Xa (F10). The protein is Proteinase-activated receptor 2 (F2RL1) of Bos taurus (Bovine).